The primary structure comprises 193 residues: Thymidine kinase (193 aa).

ATP contacts are provided by residues Ser9–Ser16 and Asp87–Gln90. The active-site Proton acceptor is Glu88. Cys145, Cys147, Cys182, and His185 together coordinate Zn(2+).

It belongs to the thymidine kinase family. Homotetramer.

The protein resides in the cytoplasm. It catalyses the reaction thymidine + ATP = dTMP + ADP + H(+). The protein is Thymidine kinase of Haemophilus influenzae (strain ATCC 51907 / DSM 11121 / KW20 / Rd).